Reading from the N-terminus, the 701-residue chain is Polyribonucleotide nucleotidyltransferase (701 aa).

Mg(2+) is bound by residues Asp-490 and Asp-496. In terms of domain architecture, KH spans 557-616; it reads PKVVTMSINPDKIRDVIGPGGKKINEIIDETGVKLDIEQDGTIFIGAVDQAMINRAKEII. The S1 motif domain maps to 626 to 694; it reads GQVYHAKVKR…KQGRVNASHK (69 aa).

The protein belongs to the polyribonucleotide nucleotidyltransferase family. Mg(2+) serves as cofactor.

Its subcellular location is the cytoplasm. It carries out the reaction RNA(n+1) + phosphate = RNA(n) + a ribonucleoside 5'-diphosphate. Its function is as follows. Involved in mRNA degradation. Catalyzes the phosphorolysis of single-stranded polyribonucleotides processively in the 3'- to 5'-direction. The polypeptide is Polyribonucleotide nucleotidyltransferase (Staphylococcus epidermidis (strain ATCC 12228 / FDA PCI 1200)).